A 331-amino-acid polypeptide reads, in one-letter code: Small ribosomal subunit protein uS2 (331 aa).

This sequence belongs to the universal ribosomal protein uS2 family.

The protein is Small ribosomal subunit protein uS2 of Rhodopseudomonas palustris (strain ATCC BAA-98 / CGA009).